The primary structure comprises 289 residues: Ribosomal RNA small subunit methyltransferase A (289 aa).

Residues asparagine 21, leucine 23, glycine 48, glutamate 69, aspartate 94, and asparagine 120 each coordinate S-adenosyl-L-methionine.

It belongs to the class I-like SAM-binding methyltransferase superfamily. rRNA adenine N(6)-methyltransferase family. RsmA subfamily.

It localises to the cytoplasm. The catalysed reaction is adenosine(1518)/adenosine(1519) in 16S rRNA + 4 S-adenosyl-L-methionine = N(6)-dimethyladenosine(1518)/N(6)-dimethyladenosine(1519) in 16S rRNA + 4 S-adenosyl-L-homocysteine + 4 H(+). Specifically dimethylates two adjacent adenosines (A1518 and A1519) in the loop of a conserved hairpin near the 3'-end of 16S rRNA in the 30S particle. May play a critical role in biogenesis of 30S subunits. In Actinobacillus pleuropneumoniae serotype 7 (strain AP76), this protein is Ribosomal RNA small subunit methyltransferase A.